The sequence spans 343 residues: tRNA N6-adenosine threonylcarbamoyltransferase (343 aa).

Fe cation contacts are provided by His120 and His124. Residues 142-146 (VVSGG), Asp175, Gly188, Asp192, and Asn281 contribute to the substrate site. Asp309 provides a ligand contact to Fe cation.

The protein belongs to the KAE1 / TsaD family. Requires Fe(2+) as cofactor.

It is found in the cytoplasm. The enzyme catalyses L-threonylcarbamoyladenylate + adenosine(37) in tRNA = N(6)-L-threonylcarbamoyladenosine(37) in tRNA + AMP + H(+). Required for the formation of a threonylcarbamoyl group on adenosine at position 37 (t(6)A37) in tRNAs that read codons beginning with adenine. Is involved in the transfer of the threonylcarbamoyl moiety of threonylcarbamoyl-AMP (TC-AMP) to the N6 group of A37, together with TsaE and TsaB. TsaD likely plays a direct catalytic role in this reaction. This is tRNA N6-adenosine threonylcarbamoyltransferase from Halalkalibacterium halodurans (strain ATCC BAA-125 / DSM 18197 / FERM 7344 / JCM 9153 / C-125) (Bacillus halodurans).